Reading from the N-terminus, the 264-residue chain is Inner membrane ABC transporter permease protein YdcV (264 aa).

The Cytoplasmic segment spans residues 1 to 12 (MHSERAPFFLKL). The chain crosses the membrane as a helical span at residues 13-33 (AAWGGVVFLHFPILIIAAYAF). The Periplasmic portion of the chain corresponds to 34–70 (NTEDAAFSFPPQGLTLRWFSVAAQRSDILDAVTLSLK). Positions 65 to 252 (VTLSLKVAAL…MLVTTLPILG (188 aa)) constitute an ABC transmembrane type-1 domain. A helical membrane pass occupies residues 71–91 (VAALATLIALVLGTLAAAALW). Residues 92–100 (RRDFFGKNA) lie on the Cytoplasmic side of the membrane. A helical membrane pass occupies residues 101–121 (ISLLLLLPIALPGIVTGLALL). Residues 122–128 (TAFKTIN) lie on the Periplasmic side of the membrane. Residues 129–149 (LEPGFFTIVVGHATFCVVVVF) form a helical membrane-spanning segment. The Cytoplasmic segment spans residues 150-189 (NNVIARFRRTSWSLVEASMDLGANGWQTFRYVVLPNLSSA). A helical membrane pass occupies residues 190–210 (LLAGGMLAFALSFDEIIVTTF). Topologically, residues 211–236 (TAGHERTLPLWLLNQLGRPRDVPVTN) are periplasmic. Residues 237 to 257 (VVALLVMLVTTLPILGAWWLT) traverse the membrane as a helical segment. Over 258–264 (REGDNGQ) the chain is Cytoplasmic.

Belongs to the binding-protein-dependent transport system permease family. CysTW subfamily.

It is found in the cell inner membrane. Its function is as follows. Probably part of the ABC transporter complex YdcSTUV. Probably responsible for the translocation of the substrate across the membrane. This chain is Inner membrane ABC transporter permease protein YdcV (ydcV), found in Shigella flexneri.